The following is a 359-amino-acid chain: Cytoplasmic tRNA 2-thiolation protein 1 (359 aa).

It belongs to the TtcA family. CTU1/NCS6/ATPBD3 subfamily. As to quaternary structure, interacts with NCS2 and URM1. May act by forming a heterodimer with NCS2. Component of a large molecular weight complex of more than 250 kDa.

The protein resides in the cytoplasm. Its subcellular location is the mitochondrion. The protein operates within tRNA modification; 5-methoxycarbonylmethyl-2-thiouridine-tRNA biosynthesis. In terms of biological role, plays a central role in 2-thiolation of mcm(5)S(2)U at tRNA wobble positions of tRNA(Lys), tRNA(Glu) and tRNA(Gln). Directly binds tRNAs and probably acts by catalyzing adenylation of tRNAs, an intermediate required for 2-thiolation. It is unclear whether it acts as a sulfurtransferase that transfers sulfur from thiocarboxylated URM1 onto the uridine of tRNAs at wobble position. Prior mcm(5) tRNA modification by the elongator complex is required for 2-thiolation. May also be involved in protein urmylation. May also be involved in protein urmylation and in invasive and pseudohyphal growth. The sequence is that of Cytoplasmic tRNA 2-thiolation protein 1 from Saccharomyces cerevisiae (strain ATCC 204508 / S288c) (Baker's yeast).